We begin with the raw amino-acid sequence, 699 residues long: Elongation factor G (699 aa).

The tr-type G domain occupies 8–288 (EDYRNFGIMA…AVVDYLPSPI (281 aa)). GTP-binding positions include 17–24 (AHIDAGKT), 86–90 (DTPGH), and 140–143 (NKMD).

This sequence belongs to the TRAFAC class translation factor GTPase superfamily. Classic translation factor GTPase family. EF-G/EF-2 subfamily.

The protein resides in the cytoplasm. Functionally, catalyzes the GTP-dependent ribosomal translocation step during translation elongation. During this step, the ribosome changes from the pre-translocational (PRE) to the post-translocational (POST) state as the newly formed A-site-bound peptidyl-tRNA and P-site-bound deacylated tRNA move to the P and E sites, respectively. Catalyzes the coordinated movement of the two tRNA molecules, the mRNA and conformational changes in the ribosome. The sequence is that of Elongation factor G from Rhizobium meliloti (strain 1021) (Ensifer meliloti).